Reading from the N-terminus, the 231-residue chain is dTTP/UTP pyrophosphatase (231 aa).

The active-site Proton acceptor is the aspartate 81.

Belongs to the Maf family. YhdE subfamily. The cofactor is a divalent metal cation.

It localises to the cytoplasm. The enzyme catalyses dTTP + H2O = dTMP + diphosphate + H(+). The catalysed reaction is UTP + H2O = UMP + diphosphate + H(+). Nucleoside triphosphate pyrophosphatase that hydrolyzes dTTP and UTP. May have a dual role in cell division arrest and in preventing the incorporation of modified nucleotides into cellular nucleic acids. In Lawsonia intracellularis (strain PHE/MN1-00), this protein is dTTP/UTP pyrophosphatase.